Consider the following 144-residue polypeptide: Large ribosomal subunit protein uL16c (144 aa).

Belongs to the universal ribosomal protein uL16 family. As to quaternary structure, part of the 50S ribosomal subunit.

Its subcellular location is the plastid. The protein resides in the chloroplast. The chain is Large ribosomal subunit protein uL16c from Chara vulgaris (Common stonewort).